The following is a 252-amino-acid chain: Chitooligosaccharide deacetylase (252 aa).

Mg(2+) is bound by residues His61 and His125.

This sequence belongs to the YdjC deacetylase family. ChbG subfamily. In terms of assembly, homodimer. It depends on Mg(2+) as a cofactor.

Its subcellular location is the cytoplasm. It carries out the reaction N,N'-diacetylchitobiose + H2O = N-acetyl-beta-D-glucosaminyl-(1-&gt;4)-D-glucosamine + acetate. The enzyme catalyses diacetylchitobiose-6'-phosphate + H2O = N'-monoacetylchitobiose-6'-phosphate + acetate. It participates in glycan degradation; chitin degradation. In terms of biological role, involved in the degradation of chitin. ChbG is essential for growth on the acetylated chitooligosaccharides chitobiose and chitotriose but is dispensable for growth on cellobiose and chitosan dimer, the deacetylated form of chitobiose. Deacetylation of chitobiose-6-P and chitotriose-6-P is necessary for both the activation of the chb promoter by the regulatory protein ChbR and the hydrolysis of phosphorylated beta-glucosides by the phospho-beta-glucosidase ChbF. Catalyzes the removal of only one acetyl group from chitobiose-6-P to yield monoacetylchitobiose-6-P, the inducer of ChbR and the substrate of ChbF. The chain is Chitooligosaccharide deacetylase from Escherichia coli O139:H28 (strain E24377A / ETEC).